A 203-amino-acid polypeptide reads, in one-letter code: Urease accessory protein UreG (203 aa).

Gly14–Thr21 is a GTP binding site.

This sequence belongs to the SIMIBI class G3E GTPase family. UreG subfamily. Homodimer. UreD, UreF and UreG form a complex that acts as a GTP-hydrolysis-dependent molecular chaperone, activating the urease apoprotein by helping to assemble the nickel containing metallocenter of UreC. The UreE protein probably delivers the nickel.

It is found in the cytoplasm. Its function is as follows. Facilitates the functional incorporation of the urease nickel metallocenter. This process requires GTP hydrolysis, probably effectuated by UreG. This Allorhizobium ampelinum (strain ATCC BAA-846 / DSM 112012 / S4) (Agrobacterium vitis (strain S4)) protein is Urease accessory protein UreG.